A 460-amino-acid chain; its full sequence is Tyrosine phenol-lyase (460 aa).

An N6-(pyridoxal phosphate)lysine modification is found at lysine 260.

This sequence belongs to the beta-eliminating lyase family. As to quaternary structure, homotetramer. Pyridoxal 5'-phosphate serves as cofactor.

It catalyses the reaction L-tyrosine + H2O = phenol + pyruvate + NH4(+). This is Tyrosine phenol-lyase from Clostridium tetani (strain Massachusetts / E88).